The sequence spans 275 residues: Melanoma-associated antigen B5 (275 aa).

Residues M1–E33 are disordered. A compositionally biased stretch (basic and acidic residues) spans S11 to E21. Over residues P23–E33 the composition is skewed to low complexity. In terms of domain architecture, MAGE spans I40–A239.

As to expression, expressed in testis. Not expressed in other normal tissues, but is expressed in tumors of different histological origins.

The protein is Melanoma-associated antigen B5 (MAGEB5) of Homo sapiens (Human).